The primary structure comprises 555 residues: uncharacterized protein (555 aa).

The Extracellular portion of the chain corresponds to 1 to 83 (MSNEDETTRL…GRRKLLCLYG (83 aa)). Residues 84-104 (LVMIICIAESISMTATIPLVM) traverse the membrane as a helical segment. The Cytoplasmic segment spans residues 105–125 (DKVAEGISDENGHYDSVAVQT). The helical transmembrane segment at 126-146 (IVSSISSSTMMIAGAISIFMA) threads the bilayer. Residues 147–188 (GKWGELSDRIGRVRVFKYMSGIRVIGLLTHVFTLSSKMKYHK) lie on the Extracellular side of the membrane. A helical transmembrane segment spans residues 189–209 (WAIVLTACIVPSFGGLFALVA). Residues 210-229 (NGNSYVSDIVKTEHRMVTIG) lie on the Cytoplasmic side of the membrane. Residues 230–250 (IMMSCIYATMGVGPMFGSFLV) traverse the membrane as a helical segment. Residues 251–257 (KWTHGNG) lie on the Extracellular side of the membrane. A helical membrane pass occupies residues 258-278 (FIPIYTSIAFVILALIICETI). The Cytoplasmic segment spans residues 279–356 (MVEPRHETQM…LVPRHTVILL (78 aa)). The interval 289 to 311 (AHSQSTYTKRREKLRSQSGSDDA) is disordered. Residues 357 to 377 (IVLDILFVCGTTSCMPALILF) form a helical membrane-spanning segment. The Extracellular segment spans residues 378 to 386 (STYEYKWHA). A helical membrane pass occupies residues 387–407 (VELGYFISILGIGRGVVLLVV). The Cytoplasmic segment spans residues 408–428 (SPTLLYTLKRIYQHLNHSIDK). A helical transmembrane segment spans residues 429–449 (IDIFCIQFSMIVITLSLFVMI). The Extracellular segment spans residues 450 to 459 (RFGEKTPTSM). A helical membrane pass occupies residues 460–480 (IIFALLQALSAFCSPTLQSGI). Residues 481–491 (IKYTSKKHTGE) are Cytoplasmic-facing. A helical transmembrane segment spans residues 492–512 (MFGAMALVRSCVMLVIPPILL). The Extracellular segment spans residues 513–523 (KLYGSTVSVNP). Residues 524–544 (SLFMYIPFSTSIVAILLTFFL) traverse the membrane as a helical segment. Residues 545–555 (RIYKNPPLDGP) are Cytoplasmic-facing.

The protein resides in the membrane. This is an uncharacterized protein from Saccharomyces cerevisiae (strain ATCC 204508 / S288c) (Baker's yeast).